The following is a 284-amino-acid chain: SF-assemblin (284 aa).

The disordered stretch occupies residues 1–30 (PTPSPEARVASRPFLDSPLPGSPRSGSPTG). Residues 1–38 (PTPSPEARVASRPFLDSPLPGSPRSGSPTGYITATKAI) are nonhelical region. Over residues 17–30 (SPLPGSPRSGSPTG) the composition is skewed to low complexity. Positions 39–284 (SAGKLEHVAE…QDGLRIVNNS (246 aa)) are rod. Coiled-coil stretches lie at residues 56–102 (EIEL…QIQV) and 239–268 (LDEI…QAVN).

It belongs to the SF-assemblin family. Post-translationally, consists of at least four isoforms including two phosphorylated.

The protein resides in the cytoplasm. The protein localises to the cytoskeleton. Functionally, major component of the striated microtubule-associated fibers (SMAFs; system-I-fibers). This chain is SF-assemblin, found in Spermatozopsis similis (Green alga).